We begin with the raw amino-acid sequence, 290 residues long: Acetylglutamate kinase (290 aa).

Substrate-binding positions include 60–61 (GG), Arg-82, and Asn-185.

Belongs to the acetylglutamate kinase family. ArgB subfamily.

Its subcellular location is the cytoplasm. It carries out the reaction N-acetyl-L-glutamate + ATP = N-acetyl-L-glutamyl 5-phosphate + ADP. The protein operates within amino-acid biosynthesis; L-arginine biosynthesis; N(2)-acetyl-L-ornithine from L-glutamate: step 2/4. Its function is as follows. Catalyzes the ATP-dependent phosphorylation of N-acetyl-L-glutamate. This is Acetylglutamate kinase from Archaeoglobus fulgidus (strain ATCC 49558 / DSM 4304 / JCM 9628 / NBRC 100126 / VC-16).